The primary structure comprises 124 residues: Small ribosomal subunit protein uS12 (124 aa).

3-methylthioaspartic acid is present on Asp89. The interval 103 to 124 (DTAGVQNRNRGRSKYGAKRPKK) is disordered. Over residues 111–124 (NRGRSKYGAKRPKK) the composition is skewed to basic residues.

The protein belongs to the universal ribosomal protein uS12 family. In terms of assembly, part of the 30S ribosomal subunit. Contacts proteins S8 and S17. May interact with IF1 in the 30S initiation complex.

Its function is as follows. With S4 and S5 plays an important role in translational accuracy. In terms of biological role, interacts with and stabilizes bases of the 16S rRNA that are involved in tRNA selection in the A site and with the mRNA backbone. Located at the interface of the 30S and 50S subunits, it traverses the body of the 30S subunit contacting proteins on the other side and probably holding the rRNA structure together. The combined cluster of proteins S8, S12 and S17 appears to hold together the shoulder and platform of the 30S subunit. This chain is Small ribosomal subunit protein uS12, found in Desulforudis audaxviator (strain MP104C).